Reading from the N-terminus, the 325-residue chain is ATP synthase gamma chain (325 aa).

The protein belongs to the ATPase gamma chain family. In terms of assembly, F-type ATPases have 2 components, CF(1) - the catalytic core - and CF(0) - the membrane proton channel. CF(1) has five subunits: alpha(3), beta(3), gamma(1), delta(1), epsilon(1). CF(0) has three main subunits: a, b and c.

The protein resides in the cell membrane. In terms of biological role, produces ATP from ADP in the presence of a proton gradient across the membrane. The gamma chain is believed to be important in regulating ATPase activity and the flow of protons through the CF(0) complex. This chain is ATP synthase gamma chain, found in Corynebacterium glutamicum (strain R).